The sequence spans 545 residues: Methionine--tRNA ligase (545 aa).

Positions 13-23 match the 'HIGH' region motif; it reads PYANGEIHLGH. Zn(2+) is bound by residues Cys144, Cys147, Cys157, and Cys160. The 'KMSKS' region motif lies at 329–333; the sequence is KMSKS. Lys332 contributes to the ATP binding site.

This sequence belongs to the class-I aminoacyl-tRNA synthetase family. MetG type 1 subfamily. In terms of assembly, monomer. Zn(2+) serves as cofactor.

Its subcellular location is the cytoplasm. The catalysed reaction is tRNA(Met) + L-methionine + ATP = L-methionyl-tRNA(Met) + AMP + diphosphate. Its function is as follows. Is required not only for elongation of protein synthesis but also for the initiation of all mRNA translation through initiator tRNA(fMet) aminoacylation. In Vesicomyosocius okutanii subsp. Calyptogena okutanii (strain HA), this protein is Methionine--tRNA ligase.